The chain runs to 583 residues: Transmembrane protein 108 (583 aa).

The chain crosses the membrane as a helical span at residues 7 to 27; the sequence is ALYCQLLSFLLTLALTEALVF. Positions 31–176 are interacts with SH3GL2; the sequence is EPSPRESLQV…ATIRRPPRPP (146 aa). Disordered regions lie at residues 71–360 and 376–404; these read VTPT…GVFA and VPSE…STVS. 2 stretches are compositionally biased toward polar residues: residues 80–93 and 100–122; these read PSSQ…TTTP and PTNT…SLST. Over residues 177–187 the composition is skewed to low complexity; the sequence is GSSRKGAGSSP. Positions 180–413 are interacts with DST (isoform 1); it reads RKGAGSSPRP…SQAEEKAVAT (234 aa). 3 stretches are compositionally biased toward polar residues: residues 251 to 273, 310 to 319, and 333 to 357; these read YSSS…SWVP, ASGTPASQQR, and DGSS…TNSG. The helical transmembrane segment at 477 to 497 threads the bilayer; the sequence is IAWVILAISVPISSCSVLLTV. Positions 498–583 are interaction with CYFIP2; it reads CCLRRKKKPA…FVGNDQVSEI (86 aa).

Interacts with DST (isoform 1). Interacts with SH3GL2. Interacts (via N-terminus) with CYFIP1 and CYFIP2; the interactions associate TMEM108 with the WAVE1 complex. In terms of processing, glycosylated.

Its subcellular location is the membrane. The protein localises to the postsynaptic density. It localises to the endosome membrane. It is found in the cell projection. The protein resides in the axon. Its subcellular location is the dendrite. The protein localises to the early endosome. Its function is as follows. Transmembrane protein required for proper cognitive functions. Involved in the development of dentate gyrus (DG) neuron circuitry, is necessary for AMPA receptors surface expression and proper excitatory postsynaptic currents of DG granule neurons. Regulates the organization and stability of the microtubule network of sensory neurons to allow axonal transport. Through the interaction with DST, mediates the docking of the dynein/dynactin motor complex to vesicle cargos for retrograde axonal transport. In hippocampal neurons, required for BDNF-dependent dendrite outgrowth. Cooperates with SH3GL2 and recruits the WAVE1 complex to facilitate actin-dependent BDNF:NTRK2 early endocytic trafficking and mediate signaling from early endosomes. This is Transmembrane protein 108 from Bos taurus (Bovine).